The primary structure comprises 397 residues: MAKAKFERDKPHVNIGTIGHVDHGKTTLTAAITKVLHDKHPELNPFTPFDEIDKAPEEKQRGITIQIAHVEYQTEKRHYAHVDAPGHADYVKNMITGAAQMDGAILVVAATDGPMPQTREHVLLARQVGVPYILVALNKADMVDDEEIIELVEMEVRELLSAQEFPGDDVPVVRVSALKALEGDAEWGDKIMELLDAVDENVPDPERETDKPFLMPIEDVFSITGRGTVVTGRIERGVINVNEEVEMVGIKEKPLKTTVTGVEMFRKLLDQGQAGDNVGLLIRGIKREEVERGMVVVKPGTTTPHTEFEAQVYILSKDEGGRHTPFFNNYRPQFYFRTTDVTGVVTLPEGTEMVMPGDNTEMSVQLIQPIAMDEGLRFAIREGGRTVGAGRVTKIHK.

One can recognise a tr-type G domain in the interval 10–206 (KPHVNIGTIG…AVDENVPDPE (197 aa)). The G1 stretch occupies residues 19 to 26 (GHVDHGKT). Residue 19-26 (GHVDHGKT) coordinates GTP. Thr26 lines the Mg(2+) pocket. A G2 region spans residues 62–66 (GITIQ). Positions 83 to 86 (DAPG) are G3. GTP is bound by residues 83-87 (DAPGH) and 138-141 (NKAD). Positions 138–141 (NKAD) are G4. Residues 176 to 178 (SAL) are G5.

Belongs to the TRAFAC class translation factor GTPase superfamily. Classic translation factor GTPase family. EF-Tu/EF-1A subfamily. In terms of assembly, monomer.

The protein localises to the cytoplasm. The catalysed reaction is GTP + H2O = GDP + phosphate + H(+). Its function is as follows. GTP hydrolase that promotes the GTP-dependent binding of aminoacyl-tRNA to the A-site of ribosomes during protein biosynthesis. The chain is Elongation factor Tu from Saccharopolyspora erythraea (strain ATCC 11635 / DSM 40517 / JCM 4748 / NBRC 13426 / NCIMB 8594 / NRRL 2338).